The chain runs to 5148 residues: E3 ubiquitin-protein ligase RNF213 (5148 aa).

Residues 38 to 48 (DNTLVVSSTPE) are compositionally biased toward polar residues. Residues 38–341 (DNTLVVSSTP…QAAAPEPTSA (304 aa)) form a disordered region. Over residues 69 to 78 (PGKELEKPEE) the composition is skewed to basic and acidic residues. A compositionally biased stretch (polar residues) spans 101–113 (GTISSSEAPSSGL). Positions 130–146 (PQNQAQQGGAASQPGHP) are enriched in low complexity. Serine 196 carries the phosphoserine modification. 3 stretches are compositionally biased toward basic and acidic residues: residues 233–245 (SKGE…KKVP), 257–267 (AGKETGEDVRK), and 279–289 (KHGDQEAELKG). Residues 319–335 (AAAVKTQQAAAPQQAAA) show a composition bias toward low complexity. Residue lysine 1128 forms a Glycyl lysine isopeptide (Lys-Gly) (interchain with G-Cter in SUMO2) linkage. Residues 1957-1962 (GVGKSL), glutamate 2060, alanine 2114, aspartate 2116, and arginine 2177 contribute to the ATP site. Phosphoserine is present on serine 2234. ATP-binding residues include lysine 2460 and serine 2535. Residues 3435–3465 (EEMEIETSQSKELAEEQMEVEDSEEMKKASD) are a coiled coil. Positions 3947, 3950, 3962, 3964, 3967, 3970, 3982, 3985, 4451, and 4455 each coordinate Zn(2+). An RING-type zinc finger spans residues 3947 to 3986 (CFICHGDAQDPVCLPCDHVYCLRCIQTWLIPGQMMCPYCL). Residues 4429-4501 (MPEDLLVHAR…IRNNEDRTQT (73 aa)) form an RZ-type zinc finger. The Nucleophile; for E3 ubiquitin-lipopolysaccharide ligase activity role is filled by cysteine 4462. Cysteine 4471 and cysteine 4474 together coordinate Zn(2+).

This sequence belongs to the AAA ATPase family. Monomer. Interacts with UBE2L3/UBCH7; UBE2L3/UBCH7 is the most efficient ubiquitin-conjugating enzyme E2 for the ubiquitin ligase activity. Interacts with UBE2N/UBC13; promoting 'Lys-63'-linked ubiquitination of target proteins.

It is found in the cytoplasm. Its subcellular location is the cytosol. The protein resides in the lipid droplet. It carries out the reaction S-ubiquitinyl-[E2 ubiquitin-conjugating enzyme]-L-cysteine + [acceptor protein]-L-lysine = [E2 ubiquitin-conjugating enzyme]-L-cysteine + N(6)-ubiquitinyl-[acceptor protein]-L-lysine.. It catalyses the reaction ATP + H2O = ADP + phosphate + H(+). The protein operates within protein modification; protein ubiquitination. Functionally, atypical E3 ubiquitin ligase that can catalyze ubiquitination of both proteins and lipids, and which is involved in various processes, such as lipid metabolism, angiogenesis and cell-autonomous immunity. Acts as a key immune sensor by catalyzing ubiquitination of the lipid A moiety of bacterial lipopolysaccharide (LPS) via its RZ-type zinc-finger: restricts the proliferation of cytosolic bacteria, such as Salmonella, by generating the bacterial ubiquitin coat through the ubiquitination of LPS. Also acts indirectly by mediating the recruitment of the LUBAC complex, which conjugates linear polyubiquitin chains. Ubiquitination of LPS triggers cell-autonomous immunity, such as antibacterial autophagy, leading to degradation of the microbial invader. Involved in lipid metabolism by regulating fat storage and lipid droplet formation; act by inhibiting the lipolytic process. Also regulates lipotoxicity by inhibiting desaturation of fatty acids. Also acts as an E3 ubiquitin-protein ligase via its RING-type zinc finger: mediates 'Lys-63'-linked ubiquitination of target proteins. Involved in the non-canonical Wnt signaling pathway in vascular development: acts by mediating ubiquitination and degradation of FLNA and NFATC2 downstream of RSPO3, leading to inhibit the non-canonical Wnt signaling pathway and promoting vessel regression. Also has ATPase activity; ATPase activity is required for ubiquitination of LPS. In Mus musculus (Mouse), this protein is E3 ubiquitin-protein ligase RNF213.